We begin with the raw amino-acid sequence, 3419 residues long: Utrophin (3419 aa).

The actin-binding stretch occupies residues 1–246 (MAKYGHLEAS…LPDKKSIIMY (246 aa)). Y4 is subject to Phosphotyrosine. Residue S10 is modified to Phosphoserine. 2 consecutive Calponin-homology (CH) domains span residues 31 to 135 (DVQK…LHWQ) and 150 to 255 (TNSE…EVLP). The segment at 268–905 (TLPRKYKKEC…YQQQLENELK (638 aa)) is interaction with SYNM. The residue at position 295 (S295) is a Phosphoserine. Spectrin repeat units follow at residues 312-416 (DSYQ…SRLH), 421-525 (ELQK…NRLQ), 532-636 (QELL…NQVT), 690-795 (KKFD…RKIQ), 801-901 (NAYF…QQLE), 910-1012 (PAYL…RSLE), 1019-1121 (RDFK…SRLS), 1128-1229 (MNLK…HTLE), 1236-1333 (VELL…ISLE), 1335-1436 (QLQV…LFQK), 1438-1540 (ANFE…QDLE), 1547-1648 (RKLK…NTLL), 1653-1747 (QLEV…INSA), 1748-1840 (QMLI…KIKA), 1841-1958 (IPQR…SDRR), 1969-2070 (KQFH…PRLK), and 2077-2176 (SGYR…KTRT). Residues 1336 to 1761 (LQVLRETDHM…GQDPAGTVEA (426 aa)) form an interaction with SYNM region. S1998 carries the phosphoserine modification. The residue at position 2201 (S2201) is a Phosphoserine. Spectrin repeat units lie at residues 2216 to 2319 (ADLD…QQLE), 2336 to 2426 (EELM…SALE), 2433 to 2542 (QTSR…AHLE), 2549 to 2674 (NRLL…KQVG), and 2681 to 2783 (RDLQ…KQLQ). The segment at 2616–2640 (DQPIEAPEEPRRNPQSKTELTPEER) is disordered. The tract at residues 2785-3152 (AHRDFGPSSQ…TVLEGDNLET (368 aa)) is interaction with SYNM. One can recognise a WW domain in the interval 2799-2832 (TSVQLPWQRSISHNKVPYYINHQTQTTCWDHPKM). A ZZ-type; degenerate zinc finger spans residues 3052–3108 (KHQAKCNICKECPIVGFRYRSLKHFNYDVCQSCFFSGRTAKGHKLHYPMVEYCIPTT). Zn(2+)-binding residues include C3057, C3060, C3081, and C3084. Disordered stretches follow at residues 3277 to 3296 (RRGL…YHTS) and 3344 to 3395 (DSDS…TDLT). S3284 is subject to Phosphoserine.

In terms of assembly, homodimer. Interacts with the syntrophins SNTA1; SNTB1 and SNTB2. Interacts with SYNM. Interacts (via its WWW and ZZ domains) with DAG1 (via the PPXY motif of betaDAG1); the interaction is inhibited by the tyrosine phosphorylation of the PPXY motif of DAG1. Interacts with DTNB. Interacts with PGM5.

It is found in the postsynaptic cell membrane. The protein resides in the cytoplasm. The protein localises to the cytoskeleton. In terms of biological role, may play a role in anchoring the cytoskeleton to the plasma membrane. This is Utrophin from Rattus norvegicus (Rat).